A 467-amino-acid chain; its full sequence is ATP synthase subunit beta 1 (467 aa).

Residue 150-157 participates in ATP binding; that stretch reads GGAGVGKT.

It belongs to the ATPase alpha/beta chains family. In terms of assembly, F-type ATPases have 2 components, CF(1) - the catalytic core - and CF(0) - the membrane proton channel. CF(1) has five subunits: alpha(3), beta(3), gamma(1), delta(1), epsilon(1). CF(0) has three main subunits: a(1), b(2) and c(9-12). The alpha and beta chains form an alternating ring which encloses part of the gamma chain. CF(1) is attached to CF(0) by a central stalk formed by the gamma and epsilon chains, while a peripheral stalk is formed by the delta and b chains.

The protein resides in the cell inner membrane. It catalyses the reaction ATP + H2O + 4 H(+)(in) = ADP + phosphate + 5 H(+)(out). Produces ATP from ADP in the presence of a proton gradient across the membrane. The catalytic sites are hosted primarily by the beta subunits. The polypeptide is ATP synthase subunit beta 1 (Vibrio campbellii (strain ATCC BAA-1116)).